The primary structure comprises 145 residues: Immunity protein CdiI (145 aa).

In terms of assembly, interacts with cognate toxin fragment CdiA-CT.

Immunity protein component of a toxin-immunity protein module, which functions as a cellular contact-dependent growth inhibition (CDI) system. CDI modules allow bacteria to communicate with and inhibit the growth of closely related neighboring bacteria in a contact-dependent fashion. Protects cells against the 16S rRNase activity of CdiA-CT, its cognate toxin protein, but not against the toxic effects of a similar rRNase, non-cognate CdiA-CT from E.chrysanthemi strain EC16. This Enterobacter cloacae subsp. cloacae (strain ATCC 13047 / DSM 30054 / NBRC 13535 / NCTC 10005 / WDCM 00083 / NCDC 279-56) protein is Immunity protein CdiI.